A 98-amino-acid polypeptide reads, in one-letter code: NADH-ubiquinone oxidoreductase chain 4L (98 aa).

2 consecutive transmembrane segments (helical) span residues 26–46 and 61–81; these read LVAS…MATL and IILL…LISI.

The protein belongs to the complex I subunit 4L family. As to quaternary structure, core subunit of respiratory chain NADH dehydrogenase (Complex I) which is composed of 45 different subunits.

It localises to the mitochondrion inner membrane. It catalyses the reaction a ubiquinone + NADH + 5 H(+)(in) = a ubiquinol + NAD(+) + 4 H(+)(out). In terms of biological role, core subunit of the mitochondrial membrane respiratory chain NADH dehydrogenase (Complex I) which catalyzes electron transfer from NADH through the respiratory chain, using ubiquinone as an electron acceptor. Part of the enzyme membrane arm which is embedded in the lipid bilayer and involved in proton translocation. This Macaca nigrescens (Gorontalo macaque) protein is NADH-ubiquinone oxidoreductase chain 4L (MT-ND4L).